The chain runs to 621 residues: Rab proteins geranylgeranyltransferase component A 2 (621 aa).

Residues 113–171 (VQDTETLQRSSPLEASATPADSLDSASLPKERQSAYSTSYEVPSRHTEESDRELSLPSA) form a disordered region. Residues 115–125 (DTETLQRSSPL) are compositionally biased toward polar residues. Basic and acidic residues predominate over residues 155-166 (PSRHTEESDREL).

The protein belongs to the Rab GDI family. Monomer. Heterotrimer composed of RABGGTA, RABGGTB and CHML; within this trimer, RABGGTA and RABGGTB form the catalytic component B, while CHML (component A) mediates Rab protein binding. Interacts with RAB1A, RAB7A and RAB27A, but has much lower affinity for RAB1A, RAB7A and RAB27A than CHM. Interacts with the non-phosphorylated forms of RAB3A, RAB3B, RAB3C, RAB3D, RAB5B, RAB5C, RAB8A, RAB8B, RAB10, RAB12, RAB35, and RAB43.

It is found in the cytoplasm. The protein resides in the cytosol. In terms of biological role, substrate-binding subunit (component A) of the Rab geranylgeranyltransferase (GGTase) complex. Binds unprenylated Rab proteins and presents the substrate peptide to the catalytic component B. The component A is thought to be regenerated by transferring its prenylated Rab back to the donor membrane. Less effective than CHM in supporting prenylation of Rab3 family. In Mus musculus (Mouse), this protein is Rab proteins geranylgeranyltransferase component A 2 (Chml).